We begin with the raw amino-acid sequence, 738 residues long: Polyphosphate kinase (738 aa).

The interval 1–48 (MIGNDRWVTEIETGPVTEARPDTNAREPGDRTPAAPPAATPAATTDQL) is disordered. Residues 19–30 (ARPDTNAREPGD) are compositionally biased toward basic and acidic residues. Asn91 contacts ATP. Mg(2+) is bound by residues Arg427 and Arg457. The active-site Phosphohistidine intermediate is His487. Residues Tyr520, Arg620, and His648 each coordinate ATP.

Belongs to the polyphosphate kinase 1 (PPK1) family. It depends on Mg(2+) as a cofactor. An intermediate of this reaction is the autophosphorylated ppk in which a phosphate is covalently linked to a histidine residue through a N-P bond.

The catalysed reaction is [phosphate](n) + ATP = [phosphate](n+1) + ADP. In terms of biological role, catalyzes the reversible transfer of the terminal phosphate of ATP to form a long-chain polyphosphate (polyP). The polypeptide is Polyphosphate kinase (Mycobacterium marinum (strain ATCC BAA-535 / M)).